A 496-amino-acid chain; its full sequence is Lysine--tRNA ligase (496 aa).

Positions 409 and 416 each coordinate Mg(2+).

It belongs to the class-II aminoacyl-tRNA synthetase family. Homodimer. Mg(2+) is required as a cofactor.

It localises to the cytoplasm. It catalyses the reaction tRNA(Lys) + L-lysine + ATP = L-lysyl-tRNA(Lys) + AMP + diphosphate. The chain is Lysine--tRNA ligase from Streptococcus agalactiae serotype III (strain NEM316).